A 91-amino-acid polypeptide reads, in one-letter code: Protein transport protein sft1 (91 aa).

Topologically, residues 1-68 are cytoplasmic; that stretch reads MNDQNERRLE…RVVRSAGRRR (68 aa). A helical; Anchor for type IV membrane protein membrane pass occupies residues 69–86; it reads IMTMVLAIVGSILIIYYA. The Lumenal portion of the chain corresponds to 87–91; sequence SKWFF.

As to quaternary structure, component of a SNARE complex consisting of sed5, gos1, ykt6 and sft1.

The protein resides in the golgi apparatus membrane. Its function is as follows. Vesicle SNARE required for retrograde transport within the Golgi complex. In Schizosaccharomyces pombe (strain 972 / ATCC 24843) (Fission yeast), this protein is Protein transport protein sft1 (sft1).